The sequence spans 264 residues: uncharacterized protein (264 aa).

Residues 1–22 (MKSIKRIGLCISLLILIIFVTS) form the signal peptide. The N-palmitoyl cysteine moiety is linked to residue C23. C23 carries S-diacylglycerol cysteine lipidation.

Belongs to the staphylococcal tandem lipoprotein family.

It localises to the cell membrane. This is an uncharacterized protein from Staphylococcus aureus (strain MRSA252).